We begin with the raw amino-acid sequence, 550 residues long: Glucose-6-phosphate isomerase (550 aa).

D-glucose 6-phosphate contacts are provided by residues 163–164 (GS), 214–219 (SKTFTT), glutamine 358, glutamate 362, histidine 393, and lysine 515. The active-site Proton donor is glutamate 362. Active-site residues include histidine 393 and lysine 515.

Belongs to the GPI family. Homodimer.

The protein localises to the cytoplasm. The catalysed reaction is alpha-D-glucose 6-phosphate = beta-D-fructose 6-phosphate. It participates in carbohydrate degradation; glycolysis; D-glyceraldehyde 3-phosphate and glycerone phosphate from D-glucose: step 2/4. Its function is as follows. In the cytoplasm, catalyzes the conversion of glucose-6-phosphate to fructose-6-phosphate, the second step in glycolysis, and the reverse reaction during gluconeogenesis. This is Glucose-6-phosphate isomerase (PGI1) from Candida albicans (strain SC5314 / ATCC MYA-2876) (Yeast).